The sequence spans 54 residues: Protein GndA (54 aa).

A helical transmembrane segment spans residues 28-50 (LFVVIVSFQQRALTSSVPVFLAV).

It localises to the cell inner membrane. In Escherichia coli (strain K12), this protein is Protein GndA.